The sequence spans 830 residues: Post-transcriptional regulator MKT1 (830 aa).

K4 participates in a covalent cross-link: Glycyl lysine isopeptide (Lys-Gly) (interchain with G-Cter in ubiquitin). The tract at residues 130 to 380 is interaction with PBP1; that stretch reads RSRGWTQWNN…SPATTVTKNA (251 aa). Residues 347–400 form a disordered region; it reads DSEKNNKDGKKSNLSSPSSASSSASPATTVTKNASEKLTYEKSSTKEVRKPRDI. A phosphoserine mark is found at S358, S362, and S371. Over residues 361 to 373 the composition is skewed to low complexity; sequence SSPSSASSSASPA. Residues 380–400 show a composition bias toward basic and acidic residues; it reads ASEKLTYEKSSTKEVRKPRDI.

Belongs to the XPG/RAD2 endonuclease family. Interacts (via C-terminus) with PBP1 (via C-terminus).

The protein resides in the cytoplasm. It is found in the cytosol. Involved in 3'-UTR mediated RNA regulation. Binds to RNA-binding and RNA regulatory proteins. Complexes with PAB1-binding protein to promote mRNA interactions with poly(A)-binding protein. Promotes mating-type switching in mother cells by positively regulating HO expression. This is Post-transcriptional regulator MKT1 (MKT1) from Saccharomyces cerevisiae (strain ATCC 204508 / S288c) (Baker's yeast).